The chain runs to 766 residues: Protein zer-1 homolog (766 aa).

At A2 the chain carries N-acetylalanine. 3 LRR repeats span residues 226–245, 246–268, and 278–302; these read SLVL…IVQL, HKLR…KLTR, and LGNL…KMEE. ARM repeat units follow at residues 427 to 467, 511 to 556, 558 to 600, 602 to 643, and 714 to 756; these read RSEQ…NFSI, DNDH…NITD, TPDN…NVAE, KELR…HIMF, and PDKY…HCSN.

Belongs to the zyg-11 family. Interacts with the ELOC-ELOB/Elongin BC complex. Part of an E3 ubiquitin ligase complex including ZER1, CUL2 and Elongin BC. In terms of tissue distribution, expressed in testis, spermatocytes and spermatids (at protein level). Expressed in spermatocytes, spermatids, prostate, skeletal muscle, ovary, small intestine, heart, brain and pancreas.

In terms of biological role, serves as substrate adapter subunit in the E3 ubiquitin ligase complex ZYG11B-CUL2-Elongin BC. Acts to target substrates bearing N-terminal degrons for proteasomal degradation with the first four residues of substrates being the key recognition elements. Involved in the clearance of proteolytic fragments generated by caspase cleavage during apoptosis since N-terminal glycine degrons are strongly enriched at caspase cleavage sites. Also important in the quality control of protein N-myristoylation in which N-terminal glycine degrons are conditionally exposed after a failure of N-myristoylation. This chain is Protein zer-1 homolog, found in Homo sapiens (Human).